A 446-amino-acid chain; its full sequence is Glutamyl-tRNA reductase (446 aa).

Substrate is bound by residues 49–52 (TCNR), serine 109, 114–116 (ETQ), and glutamine 120. Cysteine 50 acts as the Nucleophile in catalysis. 189 to 194 (GAGKMG) contributes to the NADP(+) binding site.

This sequence belongs to the glutamyl-tRNA reductase family. Homodimer.

The catalysed reaction is (S)-4-amino-5-oxopentanoate + tRNA(Glu) + NADP(+) = L-glutamyl-tRNA(Glu) + NADPH + H(+). The protein operates within porphyrin-containing compound metabolism; protoporphyrin-IX biosynthesis; 5-aminolevulinate from L-glutamyl-tRNA(Glu): step 1/2. Its function is as follows. Catalyzes the NADPH-dependent reduction of glutamyl-tRNA(Glu) to glutamate 1-semialdehyde (GSA). This chain is Glutamyl-tRNA reductase, found in Priestia megaterium (Bacillus megaterium).